Here is a 367-residue protein sequence, read N- to C-terminus: tRNA/tmRNA (uracil-C(5))-methyltransferase (367 aa).

S-adenosyl-L-methionine is bound by residues Gln-189, Tyr-217, Asn-222, Glu-238, and Asp-298. The Nucleophile role is filled by Cys-323. Glu-357 acts as the Proton acceptor in catalysis.

The protein belongs to the class I-like SAM-binding methyltransferase superfamily. RNA M5U methyltransferase family. TrmA subfamily.

The enzyme catalyses uridine(54) in tRNA + S-adenosyl-L-methionine = 5-methyluridine(54) in tRNA + S-adenosyl-L-homocysteine + H(+). It carries out the reaction uridine(341) in tmRNA + S-adenosyl-L-methionine = 5-methyluridine(341) in tmRNA + S-adenosyl-L-homocysteine + H(+). Functionally, dual-specificity methyltransferase that catalyzes the formation of 5-methyluridine at position 54 (m5U54) in all tRNAs, and that of position 341 (m5U341) in tmRNA (transfer-mRNA). The protein is tRNA/tmRNA (uracil-C(5))-methyltransferase of Pseudoalteromonas translucida (strain TAC 125).